A 233-amino-acid chain; its full sequence is Movement and silencing protein TGBp1 (233 aa).

Positions 1-134 (MDCKYLLELL…ALLNGIFGCQ (134 aa)) constitute a (+)RNA virus helicase ATP-binding domain. Positions 135 to 233 (IKSRREDLCH…EFDAWSHATC (99 aa)) constitute a (+)RNA virus helicase C-terminal domain.

Belongs to the Tymovirales TGBp1 protein family. Homodimer and homooligomer. Interacts with capsid protein. Interacts with host AGO1; this interaction targets the host protein for degradation, thereby suppressing the antiviral RNA silencing.

The protein resides in the host cytoplasm. Functionally, transports viral genome to neighboring plant cells directly through plasmosdesmata, without any budding. The movement protein allows efficient cell to cell propagation, by bypassing the host cell wall barrier. Increases plasmodesma size exclusion limit. Acts as a suppressor of RNA-mediated gene silencing, also known as post-transcriptional gene silencing (PTGS), a mechanism of plant viral defense that limits the accumulation of viral RNAs. The sequence is that of Movement and silencing protein TGBp1 from Narcissus mosaic virus (NMV).